The following is a 101-amino-acid chain: Small ribosomal subunit protein bS18c (101 aa).

This sequence belongs to the bacterial ribosomal protein bS18 family. Part of the 30S ribosomal subunit.

It is found in the plastid. Its subcellular location is the chloroplast. The protein is Small ribosomal subunit protein bS18c of Citrus sinensis (Sweet orange).